Here is a 146-residue protein sequence, read N- to C-terminus: Single-stranded DNA-binding protein 1-A, mitochondrial (146 aa).

The transit peptide at 1-17 (MFHRPALQVFRQFARCQ) directs the protein to the mitochondrion. An SSB domain is found at 28-140 (INKVQLLGRV…IIADNIIFLS (113 aa)).

In terms of assembly, homotetramer.

The protein resides in the mitochondrion. It is found in the mitochondrion matrix. It localises to the mitochondrion nucleoid. In terms of biological role, binds preferentially and cooperatively to pyrimidine rich single-stranded DNA (ss-DNA). Required to maintain the copy number of mitochondrial DNA (mtDNA) and plays crucial roles during mtDNA replication that stimulate activity of the DNA polymerase at the replication fork. May also function in mtDNA repair. This Xenopus laevis (African clawed frog) protein is Single-stranded DNA-binding protein 1-A, mitochondrial (ssbp1-a).